Reading from the N-terminus, the 525-residue chain is Acetyl-CoA hydrolase (525 aa).

280 to 284 serves as a coordination point for CoA; that stretch reads GIGNI. E305 acts as the 5-glutamyl coenzyme A thioester intermediate in catalysis. Residues N395 and G399 each coordinate CoA.

The protein belongs to the acetyl-CoA hydrolase/transferase family.

It localises to the cytoplasm. The enzyme catalyses acetyl-CoA + H2O = acetate + CoA + H(+). Functionally, required for utilization of acetate. The chain is Acetyl-CoA hydrolase (acu-8) from Neurospora crassa (strain ATCC 24698 / 74-OR23-1A / CBS 708.71 / DSM 1257 / FGSC 987).